The sequence spans 151 residues: Probable cGMP 3',5'-cyclic phosphodiesterase subunit delta (151 aa).

This sequence belongs to the PDE6D/unc-119 family. As to quaternary structure, interacts with Pde6.

It localises to the nucleus. It is found in the cytoplasm. The sequence is that of Probable cGMP 3',5'-cyclic phosphodiesterase subunit delta from Drosophila virilis (Fruit fly).